An 83-amino-acid chain; its full sequence is Small ribosomal subunit protein bS20 (83 aa).

It belongs to the bacterial ribosomal protein bS20 family.

Functionally, binds directly to 16S ribosomal RNA. The sequence is that of Small ribosomal subunit protein bS20 from Flavobacterium johnsoniae (strain ATCC 17061 / DSM 2064 / JCM 8514 / BCRC 14874 / CCUG 350202 / NBRC 14942 / NCIMB 11054 / UW101) (Cytophaga johnsonae).